Consider the following 258-residue polypeptide: Acyl-[acyl-carrier-protein]--UDP-N-acetylglucosamine O-acyltransferase (258 aa).

Belongs to the transferase hexapeptide repeat family. LpxA subfamily. As to quaternary structure, homotrimer.

The protein localises to the cytoplasm. The enzyme catalyses a (3R)-hydroxyacyl-[ACP] + UDP-N-acetyl-alpha-D-glucosamine = a UDP-3-O-[(3R)-3-hydroxyacyl]-N-acetyl-alpha-D-glucosamine + holo-[ACP]. It participates in glycolipid biosynthesis; lipid IV(A) biosynthesis; lipid IV(A) from (3R)-3-hydroxytetradecanoyl-[acyl-carrier-protein] and UDP-N-acetyl-alpha-D-glucosamine: step 1/6. In terms of biological role, involved in the biosynthesis of lipid A, a phosphorylated glycolipid that anchors the lipopolysaccharide to the outer membrane of the cell. This is Acyl-[acyl-carrier-protein]--UDP-N-acetylglucosamine O-acyltransferase from Neisseria gonorrhoeae (strain ATCC 700825 / FA 1090).